The following is a 204-amino-acid chain: N-(5'-phosphoribosyl)anthranilate isomerase (204 aa).

It belongs to the TrpF family.

The enzyme catalyses N-(5-phospho-beta-D-ribosyl)anthranilate = 1-(2-carboxyphenylamino)-1-deoxy-D-ribulose 5-phosphate. Its pathway is amino-acid biosynthesis; L-tryptophan biosynthesis; L-tryptophan from chorismate: step 3/5. This Geobacter sp. (strain M21) protein is N-(5'-phosphoribosyl)anthranilate isomerase.